A 135-amino-acid chain; its full sequence is Ribosome-binding factor A (135 aa).

Belongs to the RbfA family. As to quaternary structure, monomer. Binds 30S ribosomal subunits, but not 50S ribosomal subunits or 70S ribosomes.

The protein localises to the cytoplasm. Its function is as follows. One of several proteins that assist in the late maturation steps of the functional core of the 30S ribosomal subunit. Associates with free 30S ribosomal subunits (but not with 30S subunits that are part of 70S ribosomes or polysomes). Required for efficient processing of 16S rRNA. May interact with the 5'-terminal helix region of 16S rRNA. The chain is Ribosome-binding factor A from Sinorhizobium fredii (strain NBRC 101917 / NGR234).